A 216-amino-acid polypeptide reads, in one-letter code: Adenylate kinase (216 aa).

Position 11 to 16 (11 to 16) interacts with ATP; it reads GSGKGT. The interval 31–60 is NMP; that stretch reads ATGDLFRKAIECGDELGDTVKSYMERGELV. Residues threonine 32, arginine 37, 58 to 60, 86 to 89, and glutamine 93 each bind AMP; these read ELV and GFPR. The LID stretch occupies residues 127 to 163; sequence GRWVCRSCQSPYQSGCAEVTKGKCSRCQGELYQRPDD. Arginine 128 is a binding site for ATP. Zn(2+) contacts are provided by cysteine 131, cysteine 134, cysteine 150, and cysteine 153. Arginine 160 and arginine 171 together coordinate AMP. ATP is bound at residue alanine 199.

It belongs to the adenylate kinase family. In terms of assembly, monomer.

The protein resides in the cytoplasm. The enzyme catalyses AMP + ATP = 2 ADP. The protein operates within purine metabolism; AMP biosynthesis via salvage pathway; AMP from ADP: step 1/1. Functionally, catalyzes the reversible transfer of the terminal phosphate group between ATP and AMP. Plays an important role in cellular energy homeostasis and in adenine nucleotide metabolism. The sequence is that of Adenylate kinase from Dehalococcoides mccartyi (strain ATCC BAA-2100 / JCM 16839 / KCTC 5957 / BAV1).